The chain runs to 251 residues: Small ribosomal subunit protein uS2 (251 aa).

Belongs to the universal ribosomal protein uS2 family.

This chain is Small ribosomal subunit protein uS2, found in Synechococcus elongatus (strain ATCC 33912 / PCC 7942 / FACHB-805) (Anacystis nidulans R2).